Consider the following 195-residue polypeptide: Probable nicotinate-nucleotide adenylyltransferase (195 aa).

This sequence belongs to the NadD family.

It carries out the reaction nicotinate beta-D-ribonucleotide + ATP + H(+) = deamido-NAD(+) + diphosphate. The protein operates within cofactor biosynthesis; NAD(+) biosynthesis; deamido-NAD(+) from nicotinate D-ribonucleotide: step 1/1. Functionally, catalyzes the reversible adenylation of nicotinate mononucleotide (NaMN) to nicotinic acid adenine dinucleotide (NaAD). The chain is Probable nicotinate-nucleotide adenylyltransferase from Salinibacter ruber (strain DSM 13855 / M31).